A 470-amino-acid chain; its full sequence is Serine hydroxymethyltransferase, cytosolic (470 aa).

The span at 1–11 shows a compositional bias: polar residues; it reads MSAYALSQSHR. The segment at 1–23 is disordered; that stretch reads MSAYALSQSHRQLTEGHLKDTDP. S2 is modified (N-acetylserine). The segment covering 12-23 has biased composition (basic and acidic residues); the sequence is QLTEGHLKDTDP. The residue at position 249 (K249) is an N6-(pyridoxal phosphate)lysine.

This sequence belongs to the SHMT family. In terms of assembly, homotetramer. It depends on pyridoxal 5'-phosphate as a cofactor.

Its subcellular location is the cytoplasm. It catalyses the reaction (6R)-5,10-methylene-5,6,7,8-tetrahydrofolate + glycine + H2O = (6S)-5,6,7,8-tetrahydrofolate + L-serine. It participates in one-carbon metabolism; tetrahydrofolate interconversion. In terms of biological role, interconversion of serine and glycine. In Candida albicans (strain SC5314 / ATCC MYA-2876) (Yeast), this protein is Serine hydroxymethyltransferase, cytosolic (SHM2).